The following is a 644-amino-acid chain: Sentrin-specific protease 1 (644 aa).

The interval 1 to 200 is interaction with CCAR2; it reads MDDIADRMRM…REIYRQLLQM (200 aa). Ser57, Ser117, Ser132, and Ser157 each carry phosphoserine. A disordered region spans residues 92 to 117; sequence QSANGQWRNSTPSSSSSLQKSRNSRS. Residues 99–117 show a composition bias toward low complexity; the sequence is RNSTPSSSSSLQKSRNSRS. Disordered stretches follow at residues 156–184 and 283–312; these read PSPSWSGSCRRSLLSPKKTQRRHVSTAEE and SKDSGTLHHPHHHHSVPHQPDNLAASNTQS. A Nuclear localization signal motif is present at residues 171–177; sequence PKKTQRR. The segment at 450–613 is protease; sequence LTITRKDIQT…GMFACKYADC (164 aa). Active-site residues include His533 and Asp550. Positions 574 to 577 match the Nuclear localization signal motif; sequence KKRK. The active-site Nucleophile is the Cys603. Residues 628–634 carry the Nuclear localization signal motif; the sequence is PYFRKRM. Positions 635-644 match the Nuclear export signal motif; sequence VWEILHRKLL.

Belongs to the peptidase C48 family. Interacts with RBM33; promoting ALKBH5 desumoylation and subsequent activation. Highly expressed in testis. Expressed at lower levels in thymus, pancreas, spleen, liver, ovary and small intestine.

It localises to the nucleus. It is found in the cytoplasm. Functionally, protease that catalyzes two essential functions in the SUMO pathway. The first is the hydrolysis of an alpha-linked peptide bond at the C-terminal end of the small ubiquitin-like modifier (SUMO) propeptides, SUMO1, SUMO2 and SUMO3 leading to the mature form of the proteins. The second is the deconjugation of SUMO1, SUMO2 and SUMO3 from targeted proteins, by cleaving an epsilon-linked peptide bond between the C-terminal glycine of the mature SUMO and the lysine epsilon-amino group of the target protein. Deconjugates SUMO1 from HIPK2. Deconjugates SUMO1 from HDAC1 and BHLHE40/DEC1, which decreases its transcriptional repression activity. Deconjugates SUMO1 from CLOCK, which decreases its transcriptional activation activity. Deconjugates SUMO2 from MTA1. Inhibits N(6)-methyladenosine (m6A) RNA methylation by mediating SUMO1 deconjugation from METTL3 and ALKBH5: METTL3 inhibits the m6A RNA methyltransferase activity, while ALKBH5 desumoylation promotes m6A demethylation. Desumoylates CCAR2 which decreases its interaction with SIRT1. Deconjugates SUMO1 from GPS2. This chain is Sentrin-specific protease 1 (SENP1), found in Homo sapiens (Human).